The chain runs to 233 residues: UPF0502 protein YpsIP31758_2048 (233 aa).

The protein belongs to the UPF0502 family.

The protein is UPF0502 protein YpsIP31758_2048 of Yersinia pseudotuberculosis serotype O:1b (strain IP 31758).